The sequence spans 445 residues: Tubulin beta chain (445 aa).

GTP contacts are provided by glutamine 11, glutamate 69, serine 138, glycine 142, threonine 143, glycine 144, asparagine 204, and asparagine 226. Glutamate 69 is a binding site for Mg(2+). The interval 426–445 (QDATAEEEGEFEEEEGDVEA) is disordered. Positions 429-445 (TAEEEGEFEEEEGDVEA) are enriched in acidic residues.

It belongs to the tubulin family. In terms of assembly, dimer of alpha and beta chains. A typical microtubule is a hollow water-filled tube with an outer diameter of 25 nm and an inner diameter of 15 nM. Alpha-beta heterodimers associate head-to-tail to form protofilaments running lengthwise along the microtubule wall with the beta-tubulin subunit facing the microtubule plus end conferring a structural polarity. Microtubules usually have 13 protofilaments but different protofilament numbers can be found in some organisms and specialized cells. Interacts with DCX/apicortin; the interaction stabilizes microtubule assembly. The cofactor is Mg(2+).

It is found in the cytoplasm. It localises to the cytoskeleton. In terms of biological role, tubulin is the major constituent of microtubules, a cylinder consisting of laterally associated linear protofilaments composed of alpha- and beta-tubulin heterodimers. Microtubules grow by the addition of GTP-tubulin dimers to the microtubule end, where a stabilizing cap forms. Below the cap, tubulin dimers are in GDP-bound state, owing to GTPase activity of alpha-tubulin. The chain is Tubulin beta chain from Plasmodium falciparum (isolate 3D7).